A 92-amino-acid chain; its full sequence is Small ribosomal subunit protein uS19c (92 aa).

This sequence belongs to the universal ribosomal protein uS19 family.

The protein resides in the plastid. Its subcellular location is the chloroplast. Functionally, protein S19 forms a complex with S13 that binds strongly to the 16S ribosomal RNA. In Chlorella vulgaris (Green alga), this protein is Small ribosomal subunit protein uS19c (rps19).